A 969-amino-acid chain; its full sequence is Protein translocase subunit SecA (969 aa).

Residues glutamine 99, 117–121 (GEGKT), and aspartate 631 each bind ATP.

It belongs to the SecA family. As to quaternary structure, monomer and homodimer. Part of the essential Sec protein translocation apparatus which comprises SecA, SecYEG and auxiliary proteins SecDF. Other proteins may also be involved.

It is found in the cell inner membrane. The protein resides in the cytoplasm. The enzyme catalyses ATP + H2O + cellular proteinSide 1 = ADP + phosphate + cellular proteinSide 2.. In terms of biological role, part of the Sec protein translocase complex. Interacts with the SecYEG preprotein conducting channel. Has a central role in coupling the hydrolysis of ATP to the transfer of proteins into and across the cell membrane, serving as an ATP-driven molecular motor driving the stepwise translocation of polypeptide chains across the membrane. This chain is Protein translocase subunit SecA, found in Chlamydia trachomatis serovar L2 (strain ATCC VR-902B / DSM 19102 / 434/Bu).